A 179-amino-acid polypeptide reads, in one-letter code: Small capsomere-interacting protein (179 aa).

The tract at residues 107 to 179 (IPLPPETGEF…QAPGTKGKKQ (73 aa)) is disordered. The segment covering 118–171 (TGGTSSSVRSASGASGGAASTAASGGSASAAASGASGGSASQSDVSSRSRSQQA) has biased composition (low complexity).

Belongs to the herpesviridae small capsomere-interacting protein family. As to quaternary structure, interacts with the major capsid protein/MCP.

It is found in the virion. The protein localises to the host nucleus. Participates in the assembly of the infectious particles by decorating the outer surface of the capsid shell and thus forming a layer between the capsid and the tegument. Complexes composed of the major capsid protein and small capsomere-interacting protein/SCP assemble together in the host cytoplasm and are translocated to the nucleus, where they accumulate and participate in capsid assembly. The polypeptide is Small capsomere-interacting protein (Equine herpesvirus 2 (strain 86/87) (EHV-2)).